Reading from the N-terminus, the 131-residue chain is MEEAGLCGLREKADMLCNSESHDILQHQDSNCSATSNKHLLEDEEGRDFITKNRSWVSPVHCTQESRRELPEQEVAPPSGQQALQCNRNKEKVLGKEVLLLMQALNTLSTPEEKLAALCKKYADLGNSPLL.

This sequence belongs to the taxilin family. In terms of tissue distribution, ubiquitously expressed.

This Homo sapiens (Human) protein is Putative gamma-taxilin 2 (TXLNGY).